Consider the following 179-residue polypeptide: ATP synthase subunit b, chloroplastic (179 aa).

Residues 28–46 traverse the membrane as a helical segment; the sequence is IINIAALVGILIYAGRDFL.

Belongs to the ATPase B chain family. As to quaternary structure, F-type ATPases have 2 components, F(1) - the catalytic core - and F(0) - the membrane proton channel. F(1) has five subunits: alpha(3), beta(3), gamma(1), delta(1), epsilon(1). F(0) has four main subunits: a(1), b(1), b'(1) and c(10-14). The alpha and beta chains form an alternating ring which encloses part of the gamma chain. F(1) is attached to F(0) by a central stalk formed by the gamma and epsilon chains, while a peripheral stalk is formed by the delta, b and b' chains.

Its subcellular location is the plastid. It is found in the chloroplast thylakoid membrane. In terms of biological role, f(1)F(0) ATP synthase produces ATP from ADP in the presence of a proton or sodium gradient. F-type ATPases consist of two structural domains, F(1) containing the extramembraneous catalytic core and F(0) containing the membrane proton channel, linked together by a central stalk and a peripheral stalk. During catalysis, ATP synthesis in the catalytic domain of F(1) is coupled via a rotary mechanism of the central stalk subunits to proton translocation. Component of the F(0) channel, it forms part of the peripheral stalk, linking F(1) to F(0). The sequence is that of ATP synthase subunit b, chloroplastic from Trieres chinensis (Marine centric diatom).